Reading from the N-terminus, the 319-residue chain is 12-(S)-hydroxy-5,8,10,14-eicosatetraenoic acid receptor (319 aa).

Topologically, residues 1–16 are extracellular; it reads MERTNCSAASTVVETA. Asn-5 carries N-linked (GlcNAc...) asparagine glycosylation. A helical transmembrane segment spans residues 17–37; it reads VGTMLTLECVLGLMGNAVALW. Residues 38–52 lie on the Cytoplasmic side of the membrane; it reads TFFYRLKVWKPYAVY. A helical transmembrane segment spans residues 53–73; sequence LFNLVVADLLLATSLPFFAAF. The Extracellular portion of the chain corresponds to 74 to 91; it reads YLKGKTWKLGHMPCQVLL. A helical membrane pass occupies residues 92–110; the sequence is FLLAFSRGVGVAFLTTVAL. The Cytoplasmic segment spans residues 111-131; the sequence is DRYLRVVHPRLRVNLLSLRAA. The chain crosses the membrane as a helical span at residues 132–152; the sequence is WGISSLIWLLMVVLTPQNLLT. Residues 153–180 lie on the Extracellular side of the membrane; it reads CRTTQNSTECPSFYPTGGAKAIATCQEV. The helical transmembrane segment at 181–201 threads the bilayer; it reads LFFLQVLLPFGLISFCNSGLI. Topologically, residues 202–219 are cytoplasmic; that stretch reads RTLQKRLRESDKQPRIRR. Residues 220–240 traverse the membrane as a helical segment; it reads ARVLVAIVLLLFGLCFLPSVL. Topologically, residues 241–265 are extracellular; the sequence is TRVLVHIFQEFKSCSVQQAIVRASD. Residues 266–284 traverse the membrane as a helical segment; the sequence is IAGSLTCLHSTLSPAIYCF. The Cytoplasmic portion of the chain corresponds to 285–319; it reads SNPAFTHSYRKVLKSLRGRRKAAESPSDNLRDSYS.

This sequence belongs to the G-protein coupled receptor 1 family. Interacts with KRAS; in a farnesylation-dependent manner.

Its subcellular location is the cell membrane. In terms of biological role, high-affinity receptor for 12-(S)-hydroxy-5,8,10,14-eicosatetraenoic acid (12-S-HETE), with much lower affinities for other HETE isomers. 12-S-HETE is a eicosanoid, a 12-lipoxygenase (ALOX12) metabolite of arachidonic acid, involved in many physiologic and pathologic processes, such as cell growth, adhesion, inflammation and cancer promotion. 12-S-HETE-binding leads to activation of ERK1/2 (MAPK3/MAPK1), MEK, and NF-kappa-B pathways and leads to cell growth. Plays a crucial role for proliferation, survival and macropinocytosis of KRAS-dependent cancer cells by mediating the translocation of KRAS from the endoplasmic reticulum to the plasma membrane (PM) and its association with the PM. Contributes to enhanced immune responses by inducing dendrite protrusion of small intestinal CX3CR1(+) phagocytes for the uptake of luminal antigens. Also acts as a key receptor for 12-(S)-HETE-mediated liver ischemia reperfusion injury. Proton-sensing G protein-coupled receptor. This chain is 12-(S)-hydroxy-5,8,10,14-eicosatetraenoic acid receptor (Gpr31), found in Mus musculus (Mouse).